Here is a 347-residue protein sequence, read N- to C-terminus: Protein RecA (347 aa).

64-71 lines the ATP pocket; it reads GPESSGKT. The tract at residues 328 to 347 is disordered; it reads DKVDEDKTEEEASQESLDLK.

Belongs to the RecA family.

It localises to the cytoplasm. In terms of biological role, can catalyze the hydrolysis of ATP in the presence of single-stranded DNA, the ATP-dependent uptake of single-stranded DNA by duplex DNA, and the ATP-dependent hybridization of homologous single-stranded DNAs. It interacts with LexA causing its activation and leading to its autocatalytic cleavage. The chain is Protein RecA from Oceanobacillus iheyensis (strain DSM 14371 / CIP 107618 / JCM 11309 / KCTC 3954 / HTE831).